Here is a 476-residue protein sequence, read N- to C-terminus: MDFEAVIGLEVHAELSTNTKIYCGCTTEFGGQPNTHVCPICLGLPGSLPQLNKRVVEYGIKAGLALNCSINKVCRMDRKNYFYPDCPKNYQITQDEVPICRDGYIEIELENGEKKKIGIERIHMEEDAGKLLHTNAGTLVDYNRAGVPLIEIVSRPDIRTPEEATKYLEKLKSILSSIEVSDCKMEQGSLRCDGNISVMPKGSEKFGVRSEIKNMNSFKALEKALSYEYDRHVEAVTKGEILEQETRRWDEANSVTVLMRSKEKANDYRYFPEGDLVTLNISDEWIEEVRKTIPELPHEKAERFVNEFRIPKYDAMVLTLTMDMAKFFEETALKSEDAKATSNWLMGDISRLMNEKTIEVKDLKFNPEQLAELIKLINAGTISNNIGKKVLDDMFKSGKSPKDIVEEKGLVQNNDEGAILEVVKKIIENNPQSIEDFKNGKKRALGFLVGLVMKETKGKANPQIVNKLVSEEANKM.

Belongs to the GatB/GatE family. GatB subfamily. In terms of assembly, heterotrimer of A, B and C subunits.

The enzyme catalyses L-glutamyl-tRNA(Gln) + L-glutamine + ATP + H2O = L-glutaminyl-tRNA(Gln) + L-glutamate + ADP + phosphate + H(+). The catalysed reaction is L-aspartyl-tRNA(Asn) + L-glutamine + ATP + H2O = L-asparaginyl-tRNA(Asn) + L-glutamate + ADP + phosphate + 2 H(+). Functionally, allows the formation of correctly charged Asn-tRNA(Asn) or Gln-tRNA(Gln) through the transamidation of misacylated Asp-tRNA(Asn) or Glu-tRNA(Gln) in organisms which lack either or both of asparaginyl-tRNA or glutaminyl-tRNA synthetases. The reaction takes place in the presence of glutamine and ATP through an activated phospho-Asp-tRNA(Asn) or phospho-Glu-tRNA(Gln). This is Aspartyl/glutamyl-tRNA(Asn/Gln) amidotransferase subunit B from Clostridium botulinum (strain Langeland / NCTC 10281 / Type F).